We begin with the raw amino-acid sequence, 729 residues long: Fatty acid oxidation complex subunit alpha (729 aa).

The tract at residues 1–189 (MLYQSETLQL…KIGLVDAVVD (189 aa)) is enoyl-CoA hydratase/isomerase. Substrate is bound at residue Asp296. A 3-hydroxyacyl-CoA dehydrogenase region spans residues 311–729 (AAPKLAAVLG…LLDVSTNQPA (419 aa)). NAD(+) is bound by residues Met324, Asp343, 400-402 (VVE), Lys407, and Ser429. His450 acts as the For 3-hydroxyacyl-CoA dehydrogenase activity in catalysis. Asn453 provides a ligand contact to NAD(+). Residues Asn500 and Tyr660 each contribute to the substrate site.

It in the N-terminal section; belongs to the enoyl-CoA hydratase/isomerase family. In the C-terminal section; belongs to the 3-hydroxyacyl-CoA dehydrogenase family. Heterotetramer of two alpha chains (FadB) and two beta chains (FadA).

The catalysed reaction is a (3S)-3-hydroxyacyl-CoA + NAD(+) = a 3-oxoacyl-CoA + NADH + H(+). The enzyme catalyses a (3S)-3-hydroxyacyl-CoA = a (2E)-enoyl-CoA + H2O. It carries out the reaction a 4-saturated-(3S)-3-hydroxyacyl-CoA = a (3E)-enoyl-CoA + H2O. It catalyses the reaction (3S)-3-hydroxybutanoyl-CoA = (3R)-3-hydroxybutanoyl-CoA. The catalysed reaction is a (3Z)-enoyl-CoA = a 4-saturated (2E)-enoyl-CoA. The enzyme catalyses a (3E)-enoyl-CoA = a 4-saturated (2E)-enoyl-CoA. Its pathway is lipid metabolism; fatty acid beta-oxidation. In terms of biological role, involved in the aerobic and anaerobic degradation of long-chain fatty acids via beta-oxidation cycle. Catalyzes the formation of 3-oxoacyl-CoA from enoyl-CoA via L-3-hydroxyacyl-CoA. It can also use D-3-hydroxyacyl-CoA and cis-3-enoyl-CoA as substrate. The sequence is that of Fatty acid oxidation complex subunit alpha from Yersinia pestis bv. Antiqua (strain Antiqua).